A 191-amino-acid chain; its full sequence is Fe/S biogenesis protein NfuA (191 aa).

[4Fe-4S] cluster contacts are provided by cysteine 149 and cysteine 152.

It belongs to the NfuA family. As to quaternary structure, homodimer. It depends on [4Fe-4S] cluster as a cofactor.

Involved in iron-sulfur cluster biogenesis. Binds a 4Fe-4S cluster, can transfer this cluster to apoproteins, and thereby intervenes in the maturation of Fe/S proteins. Could also act as a scaffold/chaperone for damaged Fe/S proteins. The chain is Fe/S biogenesis protein NfuA from Erwinia tasmaniensis (strain DSM 17950 / CFBP 7177 / CIP 109463 / NCPPB 4357 / Et1/99).